The sequence spans 94 residues: Large ribosomal subunit protein eL42 (94 aa).

The Zn(2+) site is built by Cys11, Cys14, Cys70, and Cys73. The C4-type zinc-finger motif lies at 11–73; that stretch reads CPYCKKHTIH…IDLRFKCTEC (63 aa).

Belongs to the eukaryotic ribosomal protein eL42 family. In terms of assembly, part of the 50S ribosomal subunit. Zn(2+) is required as a cofactor.

Binds to the 23S rRNA. This chain is Large ribosomal subunit protein eL42, found in Methanocaldococcus jannaschii (strain ATCC 43067 / DSM 2661 / JAL-1 / JCM 10045 / NBRC 100440) (Methanococcus jannaschii).